Reading from the N-terminus, the 275-residue chain is Large ribosomal subunit protein uL2 (275 aa).

A disordered region spans residues 223–275 (VAMNPVDHPHGGGEGRTSGGRHPVTPWGVPTKGYKTRSNKRTDKYIVRRRNKK).

The protein belongs to the universal ribosomal protein uL2 family. In terms of assembly, part of the 50S ribosomal subunit. Forms a bridge to the 30S subunit in the 70S ribosome.

One of the primary rRNA binding proteins. Required for association of the 30S and 50S subunits to form the 70S ribosome, for tRNA binding and peptide bond formation. It has been suggested to have peptidyltransferase activity; this is somewhat controversial. Makes several contacts with the 16S rRNA in the 70S ribosome. The polypeptide is Large ribosomal subunit protein uL2 (Shewanella loihica (strain ATCC BAA-1088 / PV-4)).